A 149-amino-acid polypeptide reads, in one-letter code: MAFHSLLLLCLAGLAFVSETAAVHHEGEHSKCPLMVKVLDAVRGRPAVNVDVKVFKKTEEQTWELFAAGKTNDNGEIHELTTDDKFGEGLYKVEFDTISYWKALGVSPFHEYADVVFTANDAGHRHYTIAALLSPYSFSTTAIVSNPTE.

The first 20 residues, 1–20 (MAFHSLLLLCLAGLAFVSET), serve as a signal peptide directing secretion. A Sulfocysteine modification is found at C32. K37 provides a ligand contact to L-thyroxine. E64 bears the 4-carboxyglutamate mark. L-thyroxine contacts are provided by E76 and S139.

The protein belongs to the transthyretin family. As to quaternary structure, homotetramer. Dimer of dimers. In the homotetramer, subunits assemble around a central channel that can accommodate two ligand molecules. Interacts with RBP4. Sulfonation of the reactive cysteine Cys-32 enhances the stability of the native conformation of TTR, avoiding misassembly of the protein leading to amyloid formation.

It is found in the secreted. Its function is as follows. Thyroid hormone-binding protein. Probably transports thyroxine from the bloodstream to the brain. This chain is Transthyretin (TTR), found in Notamacropus eugenii (Tammar wallaby).